The primary structure comprises 230 residues: Cytidylate kinase (230 aa).

11-19 (GPAAAGKST) serves as a coordination point for ATP.

It belongs to the cytidylate kinase family. Type 1 subfamily.

The protein localises to the cytoplasm. It carries out the reaction CMP + ATP = CDP + ADP. It catalyses the reaction dCMP + ATP = dCDP + ADP. In Oceanobacillus iheyensis (strain DSM 14371 / CIP 107618 / JCM 11309 / KCTC 3954 / HTE831), this protein is Cytidylate kinase.